A 104-amino-acid chain; its full sequence is Integration host factor subunit alpha (104 aa).

This sequence belongs to the bacterial histone-like protein family. Heterodimer of an alpha and a beta chain.

This protein is one of the two subunits of integration host factor, a specific DNA-binding protein that functions in genetic recombination as well as in transcriptional and translational control. The protein is Integration host factor subunit alpha of Bartonella quintana (strain Toulouse) (Rochalimaea quintana).